The following is a 689-amino-acid chain: Glycine--tRNA ligase beta subunit (689 aa).

It belongs to the class-II aminoacyl-tRNA synthetase family. In terms of assembly, tetramer of two alpha and two beta subunits.

The protein resides in the cytoplasm. It catalyses the reaction tRNA(Gly) + glycine + ATP = glycyl-tRNA(Gly) + AMP + diphosphate. This is Glycine--tRNA ligase beta subunit (glyS) from Coxiella burnetii (strain RSA 493 / Nine Mile phase I).